We begin with the raw amino-acid sequence, 157 residues long: Regenerating islet-derived protein 4 (157 aa).

Residues 1 to 22 form the signal peptide; sequence MASKCVRLLLLLSWVAGPEVLS. Residues Cys29 and Cys40 are joined by a disulfide bond. A C-type lectin domain is found at 36–154; it reads YRSHCYGYFR…CTKRQHFLCK (119 aa). Asn49, Asn62, and Asn101 each carry an N-linked (GlcNAc...) asparagine glycan. Intrachain disulfides connect Cys57–Cys153 and Cys128–Cys145. A carbohydrate is bound by residues 97-101 and 134-136; these read DPQKN and KDK.

Its subcellular location is the secreted. In terms of biological role, calcium-independent lectin displaying mannose-binding specificity and able to maintain carbohydrate recognition activity in an acidic environment. May be involved in inflammatory and metaplastic responses of the gastrointestinal epithelium. In Rattus norvegicus (Rat), this protein is Regenerating islet-derived protein 4 (Reg4).